The sequence spans 352 residues: Protein RecA (352 aa).

Residue 67–74 (GPESSGKT) participates in ATP binding.

This sequence belongs to the RecA family.

It localises to the cytoplasm. Its function is as follows. Can catalyze the hydrolysis of ATP in the presence of single-stranded DNA, the ATP-dependent uptake of single-stranded DNA by duplex DNA, and the ATP-dependent hybridization of homologous single-stranded DNAs. It interacts with LexA causing its activation and leading to its autocatalytic cleavage. In Enterobacter sp. (strain 638), this protein is Protein RecA.